The following is a 428-amino-acid chain: Enolase (428 aa).

Residue Q162 coordinates (2R)-2-phosphoglycerate. E204 functions as the Proton donor in the catalytic mechanism. Residues D241, E283, and D310 each contribute to the Mg(2+) site. (2R)-2-phosphoglycerate is bound by residues K335, R364, S365, and K386. K335 acts as the Proton acceptor in catalysis.

Belongs to the enolase family. Requires Mg(2+) as cofactor.

The protein resides in the cytoplasm. It localises to the secreted. It is found in the cell surface. It catalyses the reaction (2R)-2-phosphoglycerate = phosphoenolpyruvate + H2O. Its pathway is carbohydrate degradation; glycolysis; pyruvate from D-glyceraldehyde 3-phosphate: step 4/5. Its function is as follows. Catalyzes the reversible conversion of 2-phosphoglycerate (2-PG) into phosphoenolpyruvate (PEP). It is essential for the degradation of carbohydrates via glycolysis. In Rhodococcus opacus (strain B4), this protein is Enolase.